A 95-amino-acid polypeptide reads, in one-letter code: Ubiquinol-cytochrome-c reductase complex assembly factor 3 (95 aa).

The Mitochondrial matrix segment spans residues 1–7 (MTTLRKL). A helical transmembrane segment spans residues 8–28 (LLVGALLGAGAGVGTALFALV). The segment at 23–80 (ALFALVTPGEERKQAMLKEMPEQYPQRRDEAARTKELLLATLQEAAATQENVAWRKNW) is mediates lipid-binding. At 29–95 (TPGEERKQAM…GGGGGGGRSA (67 aa)) the chain is on the mitochondrial intermembrane side.

The protein belongs to the UQCC3 family. In terms of assembly, associates with the ubiquinol-cytochrome c reductase complex (mitochondrial respiratory chain complex III(CIII) or cytochrome b-c1 complex). Interacts with UQCC1. Forms a complex, named COMC, composed of UQCC1, UQCC2; UQCC3 and UQCC4; mediates MT-CYB hemylation and association with the first nuclear-encoded complex III subunit UQCRQ. Post-translationally, probably cleaved by OMA1 under mitochondrial stress conditions.

It localises to the mitochondrion inner membrane. In terms of biological role, required for the assembly of the ubiquinol-cytochrome c reductase complex (mitochondrial respiratory chain complex III or cytochrome b-c1 complex), mediating cytochrome b recruitment and probably stabilization within the complex. Thereby, plays an important role in ATP production by mitochondria. Cardiolipin-binding protein, it may also control the cardiolipin composition of mitochondria membranes and their morphology. The polypeptide is Ubiquinol-cytochrome-c reductase complex assembly factor 3 (Bos taurus (Bovine)).